The chain runs to 581 residues: Phosphatidylinositol N-acetylglucosaminyltransferase subunit Q (581 aa).

5 consecutive transmembrane segments (helical) span residues 276-298 (ANMLVSVLLDVALGLLLLSWLHS), 344-366 (LGRFFLYHIHLWISYIHLMSPFI), 381-403 (LTVALSIFSDIIALLTFHIYCFY), 446-468 (LFIGTLLFTILVFLLPTTALYYL), and 478-500 (ITVQGLIHLLVDLINSLPLYSLG).

This sequence belongs to the PIGQ family. Component of the glycosylphosphatidylinositol-N-acetylglucosaminyltransferase (GPI-GnT) complex composed at least by PIGA, PIGC, PIGH, PIGP, PIGQ, PIGY and DPM2. Interacts with PIGA, PIGH and PIGC.

The protein localises to the membrane. The protein operates within glycolipid biosynthesis; glycosylphosphatidylinositol-anchor biosynthesis. In terms of biological role, part of the glycosylphosphatidylinositol-N-acetylglucosaminyltransferase (GPI-GnT) complex that catalyzes the transfer of N-acetylglucosamine from UDP-N-acetylglucosamine to phosphatidylinositol and participates in the first step of GPI biosynthesis. The chain is Phosphatidylinositol N-acetylglucosaminyltransferase subunit Q from Mus musculus (Mouse).